Consider the following 325-residue polypeptide: Aldo-keto reductase family 1 member A1 (325 aa).

At Thr2 the chain carries N-acetylthreonine. A Phosphoserine modification is found at Ser4. NADP(+) is bound by residues 11–20 (GQKMPLIGLG), Thr21, and Trp22. Residue Ser38 is modified to Phosphoserine. Asp45 is a binding site for NADP(+). Tyr50 functions as the Proton donor in the catalytic mechanism. Residue Lys127 is modified to N6-acetyllysine; alternate. Lys127 is subject to N6-succinyllysine; alternate. Lys145 bears the N6-succinyllysine mark. Positions 162, 163, 211, 213, 215, 216, 263, 264, 265, 269, 272, and 273 each coordinate NADP(+). Ser211 is subject to Phosphoserine.

It belongs to the aldo/keto reductase family. As to quaternary structure, monomer. In terms of tissue distribution, widely expressed.

It is found in the cytoplasm. Its subcellular location is the cytosol. The protein localises to the apical cell membrane. The enzyme catalyses a primary alcohol + NADP(+) = an aldehyde + NADPH + H(+). The catalysed reaction is L-gulonate + NADP(+) = aldehydo-D-glucuronate + NADPH + H(+). It carries out the reaction L-gulono-1,4-lactone + NADP(+) = D-glucurono-3,6-lactone + NADPH + H(+). It catalyses the reaction allyl alcohol + NADP(+) = acrolein + NADPH + H(+). The enzyme catalyses glycerol + NADP(+) = D-glyceraldehyde + NADPH + H(+). The catalysed reaction is glycerol + NADP(+) = L-glyceraldehyde + NADPH + H(+). It carries out the reaction hydroxyacetone + NADP(+) = methylglyoxal + NADPH + H(+). It catalyses the reaction 3-deoxyfructose + NADP(+) = 3-deoxyglucosone + NADPH + H(+). The enzyme catalyses (R)-mevalonate + NADP(+) = (R)-mevaldate + NADPH + H(+). The catalysed reaction is pyridine 3-methanol + NADP(+) = pyridine-3-carbaldehyde + NADPH + H(+). It carries out the reaction S-nitroso-CoA + NADPH + H(+) = sulfinamide-CoA + NADP(+). It catalyses the reaction S-nitrosoglutathione + NADPH + H(+) = S-(hydroxysulfenamide)glutathione + NADP(+). Its function is as follows. Catalyzes the NADPH-dependent reduction of a wide variety of carbonyl-containing compounds to their corresponding alcohols. Displays enzymatic activity towards endogenous metabolites such as aromatic and aliphatic aldehydes, ketones, monosaccharides and bile acids, with a preference for negatively charged substrates, such as glucuronate and succinic semialdehyde. Plays an important role in ascorbic acid biosynthesis by catalyzing the reduction of D-glucuronic acid and D-glucurono-gamma-lactone. Functions as a detoxifiying enzyme by reducing a range of toxic aldehydes. Reduces methylglyoxal and 3-deoxyglucosone, which are present at elevated levels under hyperglycemic conditions and are cytotoxic. Involved in the detoxification of lipid-derived aldehydes like acrolein. Plays a role in the activation of procarcinogens, such as polycyclic aromatic hydrocarbon trans-dihydrodiols, and in the metabolism of various xenobiotics and drugs. Also acts as an inhibitor of protein S-nitrosylation by mediating degradation of S-nitroso-coenzyme A (S-nitroso-CoA), a cofactor required to S-nitrosylate proteins. S-nitroso-CoA reductase activity is involved in reprogramming intermediary metabolism in renal proximal tubules, notably by inhibiting protein S-nitrosylation of isoform 2 of PKM (PKM2). Also acts as a S-nitroso-glutathione reductase by catalyzing the NADPH-dependent reduction of S-nitrosoglutathione. Displays no reductase activity towards retinoids. The polypeptide is Aldo-keto reductase family 1 member A1 (Mus musculus (Mouse)).